The chain runs to 147 residues: Peptidyl-lysine N-acetyltransferase YjaB (147 aa).

In terms of domain architecture, N-acetyltransferase spans 3–144 (ISIRRSRHEE…KPYPLLNLAY (142 aa)).

Belongs to the acetyltransferase family.

The catalysed reaction is L-lysyl-[protein] + acetyl-CoA = N(6)-acetyl-L-lysyl-[protein] + CoA + H(+). In terms of biological role, N-epsilon-lysine acetyltransferase that catalyzes acetylation of a large number of proteins. Binds acetyl-CoA. The polypeptide is Peptidyl-lysine N-acetyltransferase YjaB (yjaB) (Escherichia coli (strain K12)).